A 172-amino-acid polypeptide reads, in one-letter code: Probable calcium-binding protein CML28 (172 aa).

4 consecutive EF-hand domains span residues 1 to 36, 37 to 72, 95 to 130, and 133 to 168; these read MDST…FGIF, IPDD…ILGD, DEDE…LGLK, and RTAD…GGFA. Ca(2+)-binding residues include Asp-14, Asn-16, Asp-18, Arg-20, Glu-25, Asp-50, Asn-52, Asp-54, Cys-56, Glu-61, Asp-108, Asn-110, Asp-112, Glu-119, Asp-146, Asp-148, Asp-150, Arg-152, and Glu-157.

Functionally, potential calcium sensor. The polypeptide is Probable calcium-binding protein CML28 (CML28) (Oryza sativa subsp. japonica (Rice)).